The chain runs to 312 residues: Apolipoprotein E (312 aa).

The first 18 residues, 1 to 18, serve as a signal peptide directing secretion; the sequence is MKALWAVLLVTLLAGCLA. A run of 8 repeats spans residues 72 to 93, 94 to 115, 116 to 137, 138 to 159, 160 to 181, 182 to 203, 204 to 225, and 226 to 247. Positions 72–247 are 8 X 22 AA approximate tandem repeats; it reads VLMEDTMTEV…RLEEVREHME (176 aa). Methionine sulfoxide is present on methionine 135. The residue at position 139 (serine 139) is a Phosphoserine. The LDL and other lipoprotein receptors binding stretch occupies residues 150–160; the sequence is HLRKMRKRLMR. 154–157 serves as a coordination point for heparin; it reads MRKR. Residues 202-282 are lipid-binding and lipoprotein association; the sequence is TANLGAGAAQ…GWFEPIVEDM (81 aa). 221–228 lines the heparin pocket; sequence GDRIRGRL. The segment at 258–312 is homooligomerization; sequence QQIRLQAEIFQARLKGWFEPIVEDMHRQWANLMEKIQASVATNPIISTPMPQENQ. Residues 270–282 form a specificity for association with VLDL region; the sequence is RLKGWFEPIVEDM.

Belongs to the apolipoprotein A1/A4/E family. In terms of assembly, homotetramer. May interact with ABCA1; functionally associated with ABCA1 in the biogenesis of HDLs. May interact with APP/A4 amyloid-beta peptide; the interaction is extremely stable in vitro but its physiological significance is unclear. May interact with MAPT. May interact with MAP2. In the cerebrospinal fluid, interacts with secreted SORL1. Interacts with PMEL; this allows the loading of PMEL luminal fragment on ILVs to induce fibril nucleation. APOE exists as multiple glycosylated and sialylated glycoforms within cells and in plasma. The extent of glycosylation and sialylation are tissue and context specific. Post-translationally, glycated in plasma VLDL. In terms of processing, phosphorylated by FAM20C in the extracellular medium.

Its subcellular location is the secreted. It localises to the extracellular space. The protein resides in the extracellular matrix. It is found in the extracellular vesicle. The protein localises to the endosome. Its subcellular location is the multivesicular body. Its function is as follows. APOE is an apolipoprotein, a protein associating with lipid particles, that mainly functions in lipoprotein-mediated lipid transport between organs via the plasma and interstitial fluids. APOE is a core component of plasma lipoproteins and is involved in their production, conversion and clearance. Apolipoproteins are amphipathic molecules that interact both with lipids of the lipoprotein particle core and the aqueous environment of the plasma. As such, APOE associates with chylomicrons, chylomicron remnants, very low density lipoproteins (VLDL) and intermediate density lipoproteins (IDL) but shows a preferential binding to high-density lipoproteins (HDL). It also binds a wide range of cellular receptors including the LDL receptor/LDLR, the LDL receptor-related proteins LRP1, LRP2 and LRP8 and the very low-density lipoprotein receptor/VLDLR that mediate the cellular uptake of the APOE-containing lipoprotein particles. Finally, APOE also has a heparin-binding activity and binds heparan-sulfate proteoglycans on the surface of cells, a property that supports the capture and the receptor-mediated uptake of APOE-containing lipoproteins by cells. A main function of APOE is to mediate lipoprotein clearance through the uptake of chylomicrons, VLDLs, and HDLs by hepatocytes. APOE is also involved in the biosynthesis by the liver of VLDLs as well as their uptake by peripheral tissues ensuring the delivery of triglycerides and energy storage in muscle, heart and adipose tissues. By participating in the lipoprotein-mediated distribution of lipids among tissues, APOE plays a critical role in plasma and tissues lipid homeostasis. APOE is also involved in two steps of reverse cholesterol transport, the HDLs-mediated transport of cholesterol from peripheral tissues to the liver, and thereby plays an important role in cholesterol homeostasis. First, it is functionally associated with ABCA1 in the biogenesis of HDLs in tissues. Second, it is enriched in circulating HDLs and mediates their uptake by hepatocytes. APOE also plays an important role in lipid transport in the central nervous system, regulating neuron survival and sprouting. This is Apolipoprotein E (Apoe) from Mus pahari (Gairdner's shrew-mouse).